The following is an 84-amino-acid chain: MAHKKGGGSTKNGRDSNPKYLGVKAAGGSTVSAGSIIVRQRGTVFKPGNNAGIGKDHTIFALIDGKVSFRNGRNNKKQIDILPV.

The tract at residues 1 to 22 is disordered; sequence MAHKKGGGSTKNGRDSNPKYLG.

This sequence belongs to the bacterial ribosomal protein bL27 family.

The protein is Large ribosomal subunit protein bL27 of Prosthecochloris aestuarii (strain DSM 271 / SK 413).